Reading from the N-terminus, the 180-residue chain is Small ribosomal subunit protein uS5 (180 aa).

The tract at residues 1–26 (MAEEKDKKQSSRRRNNRRTEKESEWQ) is disordered. Over residues 17 to 26 (RRTEKESEWQ) the composition is skewed to basic and acidic residues. The region spanning 25–88 (WQERVVQIRR…ADGKKHLVNV (64 aa)) is the S5 DRBM domain.

Belongs to the universal ribosomal protein uS5 family. In terms of assembly, part of the 30S ribosomal subunit. Contacts proteins S4 and S8.

With S4 and S12 plays an important role in translational accuracy. In terms of biological role, located at the back of the 30S subunit body where it stabilizes the conformation of the head with respect to the body. The polypeptide is Small ribosomal subunit protein uS5 (Synechococcus elongatus (strain ATCC 33912 / PCC 7942 / FACHB-805) (Anacystis nidulans R2)).